Consider the following 105-residue polypeptide: uncharacterized protein (105 aa).

The span at 1–11 (MPHRNDRRKSA) shows a compositional bias: basic residues. A disordered region spans residues 1 to 20 (MPHRNDRRKSASKAPNAIIH).

This sequence belongs to the ALB1 family.

The protein localises to the nucleus. The protein resides in the nucleolus. This is an uncharacterized protein from Schizosaccharomyces pombe (strain 972 / ATCC 24843) (Fission yeast).